A 578-amino-acid polypeptide reads, in one-letter code: ATP-dependent RNA helicase CHR1 (578 aa).

Positions 1-95 (MDIFRILSRG…NETKAKEEEI (95 aa)) are disordered. Basic and acidic residues-rich tracts occupy residues 44-53 (EVERETDFFH) and 78-94 (NKEEQMETNETKAKEEE). A Q motif motif is present at residues 131 to 159 (DMIGRFHINKKVLSNLIDNEFVEPTPIQC). A Helicase ATP-binding domain is found at 162-339 (IPITLNNRDL…HSIMKDPLRI (178 aa)). 175–182 (APTGSGKT) is an ATP binding site. Positions 286–289 (DEAD) match the DEAD box motif. The Helicase C-terminal domain occupies 350 to 514 (TIDQKLVFTG…GYSQWMEDMG (165 aa)). 2 stretches are compositionally biased toward basic and acidic residues: residues 517 to 531 (SKKEKKQIKTHEIQR) and 561 to 578 (ESKQESKQESHSNDEREE). The segment at 517–578 (SKKEKKQIKT…ESHSNDEREE (62 aa)) is disordered.

It belongs to the DEAD box helicase family. DDX52/ROK1 subfamily. Interacts with the U3 snoRNA and is associated with the 90S and 40S pre-ribosomes.

It is found in the nucleus. Its subcellular location is the nucleolus. It carries out the reaction ATP + H2O = ADP + phosphate + H(+). In terms of biological role, ATP-dependent RNA helicase involved in 40S ribosomal subunit biogenesis. Required for the processing and cleavage of 35S pre-rRNA at sites A0, A1, and A2, leading to mature 18S rRNA. The protein is ATP-dependent RNA helicase CHR1 (CHR1) of Candida albicans (strain SC5314 / ATCC MYA-2876) (Yeast).